The sequence spans 380 residues: uncharacterized protein (380 aa).

Positions 1–28 (MQFLSDTQRMVLSRAVCASFFFFHVAVA) are cleaved as a signal peptide. An SPOR domain is found at 307 to 380 (AGDEKPRGYQ…DAGYETFPLF (74 aa)).

This is an uncharacterized protein from Treponema pallidum (strain Nichols).